The sequence spans 241 residues: 2-C-methyl-D-erythritol 4-phosphate cytidylyltransferase (241 aa).

The protein belongs to the IspD/TarI cytidylyltransferase family. IspD subfamily.

It carries out the reaction 2-C-methyl-D-erythritol 4-phosphate + CTP + H(+) = 4-CDP-2-C-methyl-D-erythritol + diphosphate. It participates in isoprenoid biosynthesis; isopentenyl diphosphate biosynthesis via DXP pathway; isopentenyl diphosphate from 1-deoxy-D-xylulose 5-phosphate: step 2/6. Catalyzes the formation of 4-diphosphocytidyl-2-C-methyl-D-erythritol from CTP and 2-C-methyl-D-erythritol 4-phosphate (MEP). This Alkaliphilus metalliredigens (strain QYMF) protein is 2-C-methyl-D-erythritol 4-phosphate cytidylyltransferase.